The chain runs to 88 residues: Small ribosomal subunit protein bS16c (88 aa).

The protein belongs to the bacterial ribosomal protein bS16 family.

It localises to the plastid. Its subcellular location is the chloroplast. In Gossypium hirsutum (Upland cotton), this protein is Small ribosomal subunit protein bS16c.